Reading from the N-terminus, the 232-residue chain is Leucyl/phenylalanyl-tRNA--protein transferase (232 aa).

The protein belongs to the L/F-transferase family.

The protein localises to the cytoplasm. It catalyses the reaction N-terminal L-lysyl-[protein] + L-leucyl-tRNA(Leu) = N-terminal L-leucyl-L-lysyl-[protein] + tRNA(Leu) + H(+). The enzyme catalyses N-terminal L-arginyl-[protein] + L-leucyl-tRNA(Leu) = N-terminal L-leucyl-L-arginyl-[protein] + tRNA(Leu) + H(+). The catalysed reaction is L-phenylalanyl-tRNA(Phe) + an N-terminal L-alpha-aminoacyl-[protein] = an N-terminal L-phenylalanyl-L-alpha-aminoacyl-[protein] + tRNA(Phe). Its function is as follows. Functions in the N-end rule pathway of protein degradation where it conjugates Leu, Phe and, less efficiently, Met from aminoacyl-tRNAs to the N-termini of proteins containing an N-terminal arginine or lysine. This Nitrosospira multiformis (strain ATCC 25196 / NCIMB 11849 / C 71) protein is Leucyl/phenylalanyl-tRNA--protein transferase.